The chain runs to 504 residues: 26S proteasome non-ATPase regulatory subunit 3 (504 aa).

The 180-residue stretch at 254-433 (ARYMYYQGRI…RDGPRYMQSS (180 aa)) folds into the PCI domain.

It belongs to the proteasome subunit S3 family. The 26S proteasome is composed of a core protease, known as the 20S proteasome, capped at one or both ends by the 19S regulatory complex (RC). The RC is composed of at least 18 different subunits in two subcomplexes, the base and the lid, which form the portions proximal and distal to the 20S proteolytic core, respectively.

Its function is as follows. Acts as a regulatory subunit of the 26 proteasome which is involved in the ATP-dependent degradation of ubiquitinated proteins. This chain is 26S proteasome non-ATPase regulatory subunit 3 (rpn-3), found in Caenorhabditis elegans.